The chain runs to 61 residues: uncharacterized protein (61 aa).

Residues 1 to 28 form the signal peptide; the sequence is MHRRARRMPMRPRRSKRVRNRYTMGTFA.

This is an uncharacterized protein from Mycobacterium tuberculosis (strain ATCC 25618 / H37Rv).